The primary structure comprises 470 residues: MDRGEKIQLKRVFGYWWGTSFLLINIIGAGIFVSPKGVLAYSCMNVGVSLCVWAGCAILAMTSTLCSAEISISFPCSGAQYYFLKRYFGSTVAFLNLWTSLFLGSGVVAGQALLLAEYSIQPFFPSCSVPKLPKKCLALAMLWIVGILTSRGVKEVTWLQIASSVLKVSILSFISLTGVVFLIRGKKENVERFQNAFDAELPDISHLIQAIFQGYFAYSGGACFTLIAGELKKPRTTIPKCIFTALPLVTVVYLLVNISYLTVLTPREILSSDAVAITWADRAFPSLAWIMPFAISTSLFSNLLISIFKSSRPIYLASQEGQLPLLFNTLNSHSSPFTAVLLLVTLGSLAIILTSLIDLINYIFFTGSLWSILLMIGILRRRYQEPNLSIPYKVFLSFPLATIVIDVGLVVIPLVKSPNVHYVYVLLLVLSGLLFYIPLIHFKIRLAWFEKMTCYLQLLFNICLPDVSEE.

Over 1–11 (MDRGEKIQLKR) the chain is Cytoplasmic. Residues 12 to 32 (VFGYWWGTSFLLINIIGAGIF) form a helical membrane-spanning segment. The Extracellular segment spans residues 33–45 (VSPKGVLAYSCMN). The helical transmembrane segment at 46–66 (VGVSLCVWAGCAILAMTSTLC) threads the bilayer. The Cytoplasmic segment spans residues 67–87 (SAEISISFPCSGAQYYFLKRY). A helical transmembrane segment spans residues 88 to 108 (FGSTVAFLNLWTSLFLGSGVV). Residues 109-128 (AGQALLLAEYSIQPFFPSCS) lie on the Extracellular side of the membrane. Residues 129–149 (VPKLPKKCLALAMLWIVGILT) traverse the membrane as a helical segment. Topologically, residues 150-162 (SRGVKEVTWLQIA) are cytoplasmic. Residues 163–183 (SSVLKVSILSFISLTGVVFLI) form a helical membrane-spanning segment. Over 184 to 206 (RGKKENVERFQNAFDAELPDISH) the chain is Extracellular. Residues 207 to 227 (LIQAIFQGYFAYSGGACFTLI) traverse the membrane as a helical segment. The Cytoplasmic portion of the chain corresponds to 228–240 (AGELKKPRTTIPK). A helical membrane pass occupies residues 241-261 (CIFTALPLVTVVYLLVNISYL). Topologically, residues 262 to 287 (TVLTPREILSSDAVAITWADRAFPSL) are extracellular. The helical transmembrane segment at 288–308 (AWIMPFAISTSLFSNLLISIF) threads the bilayer. The Cytoplasmic portion of the chain corresponds to 309 to 336 (KSSRPIYLASQEGQLPLLFNTLNSHSSP). The chain crosses the membrane as a helical span at residues 337 to 357 (FTAVLLLVTLGSLAIILTSLI). A topological domain (extracellular) is located at residue Asp-358. Residues 359 to 379 (LINYIFFTGSLWSILLMIGIL) traverse the membrane as a helical segment. Residues 380–393 (RRRYQEPNLSIPYK) are Cytoplasmic-facing. Residues 394–414 (VFLSFPLATIVIDVGLVVIPL) form a helical membrane-spanning segment. Residues 415–421 (VKSPNVH) lie on the Extracellular side of the membrane. Residues 422 to 442 (YVYVLLLVLSGLLFYIPLIHF) form a helical membrane-spanning segment. At 443–470 (KIRLAWFEKMTCYLQLLFNICLPDVSEE) the chain is on the cytoplasmic side.

This sequence belongs to the amino acid-polyamine-organocation (APC) superfamily. Disulfide-linked heterodimer composed of the catalytic light subunit SLC7A13 and the heavy subunit SLC3A1. As to expression, expressed in the kidney.

It localises to the apical cell membrane. It carries out the reaction L-cystine(out) + L-aspartate(in) = L-cystine(in) + L-aspartate(out). The catalysed reaction is L-cystine(out) = L-cystine(in). It catalyses the reaction L-aspartate(in) + L-glutamate(out) = L-aspartate(out) + L-glutamate(in). The enzyme catalyses L-aspartate(in) + L-glutamine(out) = L-aspartate(out) + L-glutamine(in). It carries out the reaction L-aspartate(in) + L-methionine(out) = L-aspartate(out) + L-methionine(in). The catalysed reaction is L-leucine(out) + L-aspartate(in) = L-leucine(in) + L-aspartate(out). It catalyses the reaction L-valine(out) + L-aspartate(in) = L-valine(in) + L-aspartate(out). The enzyme catalyses L-aspartate(in) + L-phenylalanine(out) = L-aspartate(out) + L-phenylalanine(in). It carries out the reaction L-tyrosine(out) + L-aspartate(in) = L-tyrosine(in) + L-aspartate(out). The catalysed reaction is L-tryptophan(out) + L-aspartate(in) = L-tryptophan(in) + L-aspartate(out). Functionally, associates with SLC3A1/rBAT to form a functional heterodimeric complex that transports anionic and neutral amino acids across the apical plasma membrane of renal epithelium. Preferentially mediates exchange transport, but can also operate via facilitated diffusion. May act as a major transporter for L-cystine in late proximal tubules, ensuring its reabsorption from the luminal fluid in exchange for cytosolic L-glutamate or L-aspartate. In Homo sapiens (Human), this protein is Solute carrier family 7 member 13 (SLC7A13).